A 351-amino-acid polypeptide reads, in one-letter code: D-alanine--D-alanine ligase (351 aa).

The 209-residue stretch at 135–343 folds into the ATP-grasp domain; sequence NQIFLQSGQK…MEEVFADLIE (209 aa). 167–222 provides a ligand contact to ATP; it reads LMSLGFPQFLKPVEGGSSVSTYKITNQEQLSRQLALIFESDSKVMSQSFLAGTEVS. The Mg(2+) site is built by Asp298, Glu310, and Asn312.

It belongs to the D-alanine--D-alanine ligase family. Mg(2+) is required as a cofactor. The cofactor is Mn(2+).

The protein resides in the cytoplasm. The catalysed reaction is 2 D-alanine + ATP = D-alanyl-D-alanine + ADP + phosphate + H(+). The protein operates within cell wall biogenesis; peptidoglycan biosynthesis. Functionally, cell wall formation. The protein is D-alanine--D-alanine ligase of Leptospira borgpetersenii serovar Hardjo-bovis (strain JB197).